The sequence spans 127 residues: MNLLIVAIGGGIGAIARYLVGQWMMKRFPDPPFPIAMLVVNLLGSFGLGAFFGLYYHELFAASYDDIGYLFGGIGFFGAFTTYSTFSVEAVLLIREREWKKLFSYVLLSIVGSIAAFLLGFYGTSSW.

A run of 4 helical transmembrane segments spans residues 3-23, 35-55, 74-94, and 102-122; these read LLIV…VGQW, IAML…FGLY, IGFF…VLLI, and LFSY…LGFY. Na(+)-binding residues include Gly-78 and Thr-81.

Belongs to the fluoride channel Fluc/FEX (TC 1.A.43) family.

Its subcellular location is the cell membrane. The catalysed reaction is fluoride(in) = fluoride(out). Na(+) is not transported, but it plays an essential structural role and its presence is essential for fluoride channel function. Functionally, fluoride-specific ion channel. Important for reducing fluoride concentration in the cell, thus reducing its toxicity. The chain is Fluoride-specific ion channel FluC 1 from Halalkalibacterium halodurans (strain ATCC BAA-125 / DSM 18197 / FERM 7344 / JCM 9153 / C-125) (Bacillus halodurans).